Reading from the N-terminus, the 475-residue chain is Protein arginine N-methyltransferase 2 (475 aa).

The disordered stretch occupies residues 167–194; the sequence is EFLSDDDDEEMDVDDDEEDESRDGEETG. Acidic residues predominate over residues 169–194; that stretch reads LSDDDDEEMDVDDDEEDESRDGEETG. Residues 247–475 enclose the RMT2 domain; the sequence is LAGSQMDYLK…EDFYLPVCTF (229 aa). S-adenosyl-L-methionine contacts are provided by residues Y254, M285, 310–315, 331–333, 358–359, and D378; these read FGLGII, EAH, and WQ.

Belongs to the class I-like SAM-binding methyltransferase superfamily. RMT2 methyltransferase family. In terms of assembly, monomer.

It localises to the cytoplasm. The protein localises to the nucleus. In terms of biological role, S-adenosyl-L-methionine-dependent protein-arginine N-methyltransferase that methylates the delta-nitrogen atom of arginine residues to form N5-methylarginine (type IV) in target proteins. Monomethylates ribosomal protein L12. The protein is Protein arginine N-methyltransferase 2 of Yarrowia lipolytica (strain CLIB 122 / E 150) (Yeast).